Here is a 322-residue protein sequence, read N- to C-terminus: Serine protease Lpg1137 (322 aa).

Serine 68 is a catalytic residue.

It localises to the secreted. The protein resides in the host mitochondrion membrane. In terms of biological role, serine protease effector that inhibits host cell autophagy by targeting SNX17. Localizes to the host endoplasmic reticulum-mitochondria contact site and catalyzes degradation of host SNX17, thereby impairing endoplasmic reticulum-mitochondria communication, leading to inhibit autophagy as well as staurosporine-induced apoptosis. In Legionella pneumophila subsp. pneumophila (strain Philadelphia 1 / ATCC 33152 / DSM 7513), this protein is Serine protease Lpg1137.